The sequence spans 572 residues: DNA polymerase (572 aa).

The 3'-5' exonuclease and strand displacement activities stretch occupies residues 1-222; it reads MSRKMFSCDF…LPMDKEIRKA (222 aa). The interaction with the primer terminal protein stretch occupies residues 56-66; it reads YFHNLKFDGAF. 2 residues coordinate Mg(2+): D142 and D166. The tract at residues 223-226 is DNA-binding; Involved in the formation of a stable complex between TP and phi29 DNA polymerase; sequence YRGG. The segment at 227–572 is initiation, polymerization and pyrophosphorolytic activities; sequence FTWLNDKYKE…VLVDSVFTIK (346 aa). Residues D246 and V247 each contribute to the Mg(2+) site. 5-methyl-UTP-binding residues include Y251, K368, and K380. Residues D453 and D455 each coordinate Mg(2+). D455 lines the 5-methyl-UTP pocket.

It belongs to the DNA polymerase type-B family. In terms of assembly, interacts with the primer terminal protein; this interaction allows the initiation of TP-primed DNA replication at both viral DNA ends. Interacts with DNA. The cofactor is Mg(2+).

The enzyme catalyses DNA(n) + a 2'-deoxyribonucleoside 5'-triphosphate = DNA(n+1) + diphosphate. Functionally, polymerase responsible for protein-primed viral DNA replication by strand displacement with high processivity and fidelity. To start replication, the DNA polymerase forms a heterodimer with a free primer terminal protein (TP), recognizes the replication origins at both 5' ends of the linear chromosome, and initiates replication using as primer the OH-group of Ser-232 of the TP. This polymerase possesses three enzymatic activities: DNA synthesis (polymerase), primer terminal protein (TP) deoxynucleotidylation, which is the formation of a covalent linkage (phosphoester) between the hydroxyl group of a specific serine residue in TP and 5'-dAMP, a reaction directed by the third T at the 3' end, and 3' to 5' exonuclease activity. Exonuclease activity has a proofreading purpose. Since the polymerase initiates the replication on the third thymine, the TP-dAMP initiation product translocates backwards to recover the template information of the 2 terminal nucleotide (sliding back-mechanism). This is DNA polymerase from Bacillus phage Nf (Bacteriophage Nf).